The sequence spans 431 residues: MAKIINVIGREIMDSRGNPTVEAEVHLEGGFIGMAAAPSGASTGSREALELRDGDKSRYLGKGVLTAVANVNGPIRAALIGKDATAQAELDQIMIDLDGTENKDKLGANAILAVSLAAAKAAAAFKGMPLYAHIAELNGTPGQYAMPVPMMNILNGGEHADNNVDIQEFMVQPVGAKNFREALRMGAEIFHTLKKVLHGKGLSTSVGDEGGFAPNLSSNADALAVIKEAVELAGYKLGTDVTLALDCAASEFYKDGKYDLSGEGKVFDSNGFSDFLKSLTEQYPIVSIEDGLDESDWDGWAYQTKIMGDKIQLVGDDLFVTNTKILTRGIENGIANSILIKFNQIGSLTETLAAIRMAKAAGYTAVISHRSGETEDATIADLAVGTAAGQIKTGSLCRSDRVAKYNQLLRIEEQLGEKAPYRGLKEIKGQA.

A (2R)-2-phosphoglycerate-binding site is contributed by Q167. E209 serves as the catalytic Proton donor. Mg(2+) contacts are provided by D246, E289, and D316. The (2R)-2-phosphoglycerate site is built by K341, R370, S371, and K392. K341 (proton acceptor) is an active-site residue.

This sequence belongs to the enolase family. As to quaternary structure, component of the RNA degradosome, a multiprotein complex involved in RNA processing and mRNA degradation. The cofactor is Mg(2+).

The protein resides in the cytoplasm. It localises to the secreted. Its subcellular location is the cell surface. The catalysed reaction is (2R)-2-phosphoglycerate = phosphoenolpyruvate + H2O. Its pathway is carbohydrate degradation; glycolysis; pyruvate from D-glyceraldehyde 3-phosphate: step 4/5. Catalyzes the reversible conversion of 2-phosphoglycerate (2-PG) into phosphoenolpyruvate (PEP). It is essential for the degradation of carbohydrates via glycolysis. This is Enolase from Shewanella sp. (strain MR-4).